The following is a 231-amino-acid chain: Uracil-DNA glycosylase (231 aa).

Asp-74 functions as the Proton acceptor in the catalytic mechanism.

It belongs to the uracil-DNA glycosylase (UDG) superfamily. UNG family.

It is found in the cytoplasm. The catalysed reaction is Hydrolyzes single-stranded DNA or mismatched double-stranded DNA and polynucleotides, releasing free uracil.. Functionally, excises uracil residues from the DNA which can arise as a result of misincorporation of dUMP residues by DNA polymerase or due to deamination of cytosine. This is Uracil-DNA glycosylase from Campylobacter jejuni subsp. jejuni serotype O:2 (strain ATCC 700819 / NCTC 11168).